A 90-amino-acid chain; its full sequence is Probable Fe(2+)-trafficking protein (90 aa).

The protein belongs to the Fe(2+)-trafficking protein family.

Its function is as follows. Could be a mediator in iron transactions between iron acquisition and iron-requiring processes, such as synthesis and/or repair of Fe-S clusters in biosynthetic enzymes. The sequence is that of Probable Fe(2+)-trafficking protein from Albidiferax ferrireducens (strain ATCC BAA-621 / DSM 15236 / T118) (Rhodoferax ferrireducens).